Consider the following 190-residue polypeptide: UPF0301 protein Rmet_2743 (190 aa).

Belongs to the UPF0301 (AlgH) family.

The chain is UPF0301 protein Rmet_2743 from Cupriavidus metallidurans (strain ATCC 43123 / DSM 2839 / NBRC 102507 / CH34) (Ralstonia metallidurans).